The sequence spans 293 residues: MASSLLILCLVLVSLASSALCAAPRRPVDVPFGRNYIPTWAFDHIKYFNGGSEIQLHLDKYTGTGFQTKGSYLFGHFSMNIKMVPGDSAGTVTAFCLSSQNAEHDEIDFEFLGNRTGQPYILQTNVFTGGKGDREQRIYLWFDPTKAYHRYSVLWNMYQIVFLVDNIPIRVFKNLKELGVKFPFNQPMKVYNSLWNADDWATRGGLEKTDWSKAPFVAEYKGFHVDGCEASVNSRFCATQGKRWWDQTEFRDLDSFQWRRLKWVRQKFTIYNYCTDRTRYPQLPPECRRNRDI.

The N-terminal stretch at 1–21 (MASSLLILCLVLVSLASSALC) is a signal peptide. Residues 23–220 (APRRPVDVPF…WSKAPFVAEY (198 aa)) enclose the GH16 domain. Glu-106 serves as the catalytic Nucleophile. The active-site Proton donor is Glu-110. A xyloglucan-binding site is contributed by Glu-110. Asn-114 carries N-linked (GlcNAc...) asparagine glycosylation. Residues 123–125 (QTN), 133–135 (DRE), 199–200 (DW), and Gly-204 contribute to the xyloglucan site. 2 disulfides stabilise this stretch: Cys-228-Cys-237 and Cys-274-Cys-287. A xyloglucan-binding site is contributed by Arg-279.

This sequence belongs to the glycosyl hydrolase 16 family. XTH group 1 subfamily. Contains at least one intrachain disulfide bond essential for its enzymatic activity. As to expression, predominantly expressed in the phloem fibers of growing internodes. Weakly or not expressed in the xylem. In the internode, it is expressed closer to the bottom of the internode compared to XTHA.

It is found in the secreted. The protein localises to the cell wall. It localises to the extracellular space. Its subcellular location is the apoplast. It catalyses the reaction breaks a beta-(1-&gt;4) bond in the backbone of a xyloglucan and transfers the xyloglucanyl segment on to O-4 of the non-reducing terminal glucose residue of an acceptor, which can be a xyloglucan or an oligosaccharide of xyloglucan.. Its function is as follows. Catalyzes xyloglucan endohydrolysis (XEH) and/or endotransglycosylation (XET). Cleaves and religates xyloglucan polymers, an essential constituent of the primary cell wall, and thereby participates in cell wall construction of growing tissues. This chain is Probable xyloglucan endotransglucosylase/hydrolase protein B (XTHB), found in Phaseolus angularis (Azuki bean).